Reading from the N-terminus, the 107-residue chain is MQFSTTPTLEGQPIVEYCGVVTGEAILGANIFRDFFAGIRDIVGGRSGAYEKELRKAREIAFKELGEQAKALGADAVVGIDIDYETVGKDASMLMVSVSGTAVKTRR.

It belongs to the UPF0145 family.

The sequence is that of UPF0145 protein Ent638_1382 from Enterobacter sp. (strain 638).